The chain runs to 393 residues: Branched-chain-amino-acid aminotransferase, mitochondrial (393 aa).

The transit peptide at 1–16 directs the protein to the mitochondrion; that stretch reads MLQRHSLKLGKFSIRT. Lys219 carries the post-translational modification N6-(pyridoxal phosphate)lysine. Thr315 is modified (phosphothreonine).

It belongs to the class-IV pyridoxal-phosphate-dependent aminotransferase family. Pyridoxal 5'-phosphate serves as cofactor.

It is found in the mitochondrion matrix. It carries out the reaction L-leucine + 2-oxoglutarate = 4-methyl-2-oxopentanoate + L-glutamate. The catalysed reaction is L-isoleucine + 2-oxoglutarate = (S)-3-methyl-2-oxopentanoate + L-glutamate. It catalyses the reaction L-valine + 2-oxoglutarate = 3-methyl-2-oxobutanoate + L-glutamate. The enzyme catalyses a 2-oxocarboxylate + L-methionine = 4-methylsulfanyl-2-oxobutanoate + an L-alpha-amino acid. Its pathway is amino-acid biosynthesis; L-isoleucine biosynthesis; L-isoleucine from 2-oxobutanoate: step 4/4. The protein operates within amino-acid biosynthesis; L-leucine biosynthesis; L-leucine from 3-methyl-2-oxobutanoate: step 4/4. It participates in amino-acid biosynthesis; L-valine biosynthesis; L-valine from pyruvate: step 4/4. It functions in the pathway amino-acid biosynthesis; L-methionine biosynthesis via salvage pathway; L-methionine from S-methyl-5-thio-alpha-D-ribose 1-phosphate: step 6/6. In terms of biological role, mitochondrial isozyme of branched-chain-amino-acid aminotransferase, involved in the biosynthesis of the branched chain amino acids (BCAAs) leucine, isoleucine, and valine. Catalyzes the formation of methionine from 2-keto-4-methylthiobutyrate (KMTB) in the methionine salvage pathway primarily using BCAAs (leucine, isoleucine, and valine) as the amino donors. Appears to be involved in the regulation of the cell cycle, although this may be indirect via metabolic changes. Connects BCAAs and TCA-cycle metabolism governing TCA-cycle flux to activate TORC1 signaling. High copy suppressor of a temperature-sensitive mutation in the ABC transporter, ATM1. The chain is Branched-chain-amino-acid aminotransferase, mitochondrial from Saccharomyces cerevisiae (strain ATCC 204508 / S288c) (Baker's yeast).